Here is a 328-residue protein sequence, read N- to C-terminus: Fructosamine deglycase FrlB (328 aa).

SIS domains follow at residues Phe-15–Asn-153 and Asn-181–Glu-311.

Homooctamer.

Functionally, catalyzes the conversion of a range of fructosamine 6-phosphates to glucose 6-phosphate and a free amino acid. The polypeptide is Fructosamine deglycase FrlB (frlB) (Bacillus subtilis (strain 168)).